The following is a 463-amino-acid chain: L-2-hydroxyglutarate dehydrogenase, mitochondrial (463 aa).

Residues 1-52 (MVPALRYLGSVCGRARGIFPGGFSAAHTPASGKSRLLCQGGRRASTSSFDIV) constitute a mitochondrion transit peptide. K104 and K173 each carry N6-acetyllysine.

It belongs to the L2HGDH family. The cofactor is FAD.

Its subcellular location is the mitochondrion. It catalyses the reaction (S)-2-hydroxyglutarate + A = 2-oxoglutarate + AH2. In Bos taurus (Bovine), this protein is L-2-hydroxyglutarate dehydrogenase, mitochondrial (L2HGDH).